The following is a 623-amino-acid chain: Immunity-related GTPase family Q protein (623 aa).

Cys152 and Cys158 are joined by a disulfide. A coiled-coil region spans residues 155–180 (SDGCEELERLRAALQSQAEALRRLLP). Residues 186–189 (FEVL) carry the LIR 1 motif. Phosphothreonine is present on Thr203. In terms of domain architecture, IRG-type G spans 223–449 (ARLDLAVAGK…PGLCEWLRRA (227 aa)). Positions 334–393 (EGEDPECLGEGKMENPKGESLKNAGGGGLENALSKGREKCSAGSQKAGSGEGPGKAGSEG) are disordered. Positions 342-353 (GEGKMENPKGES) are enriched in basic and acidic residues. Positions 421–424 (WEVL) match the LIR 2 motif.

Belongs to the TRAFAC class dynamin-like GTPase superfamily. IRG family. As to quaternary structure, interacts (via LIR motif 1) with GABARAPL2. Interacts (via LIR motif 2) with MAP1LC3B/LC3B.

The protein resides in the lysosome. It is found in the cytoplasmic vesicle. The protein localises to the autophagosome. Functionally, autophagy receptor that specifically promotes clearance of misfolded MHC class I molecules by targeting them to the lysosome for degradation. Acts as a molecular adapter that specifically recognizes and binds (1) misfolded MHC class I molecules following their ubiquitination, as well as (2) autophagy-related proteins, promoting the recruitment of misfolded MHC class I molecules to autophagy machinery for degradation. Degradation of misfolded MHC class I molecules is essential to prevent accumulation of defective MHC class I complexes at the surface of CD8(+) T-cells and prevent a stronger T-cell-mediated response. In contrast to other members of the family, does not show GTPase activity. The sequence is that of Immunity-related GTPase family Q protein from Homo sapiens (Human).